A 367-amino-acid chain; its full sequence is Phospho-N-acetylmuramoyl-pentapeptide-transferase (367 aa).

The next 10 helical transmembrane spans lie at 28 to 48, 75 to 95, 96 to 116, 134 to 154, 175 to 195, 206 to 226, 243 to 263, 271 to 291, 295 to 315, and 344 to 364; these read GALM…IGWL, TMGG…WADL, TNAY…IGFI, FKLV…THTA, LMIN…VGSG, GLAI…AYVV, AGEI…FLWW, FMGD…AVAI, LVLA…MVQV, and TIVI…LATL.

It belongs to the glycosyltransferase 4 family. MraY subfamily. It depends on Mg(2+) as a cofactor.

It localises to the cell inner membrane. The catalysed reaction is UDP-N-acetyl-alpha-D-muramoyl-L-alanyl-gamma-D-glutamyl-meso-2,6-diaminopimeloyl-D-alanyl-D-alanine + di-trans,octa-cis-undecaprenyl phosphate = di-trans,octa-cis-undecaprenyl diphospho-N-acetyl-alpha-D-muramoyl-L-alanyl-D-glutamyl-meso-2,6-diaminopimeloyl-D-alanyl-D-alanine + UMP. The protein operates within cell wall biogenesis; peptidoglycan biosynthesis. In terms of biological role, catalyzes the initial step of the lipid cycle reactions in the biosynthesis of the cell wall peptidoglycan: transfers peptidoglycan precursor phospho-MurNAc-pentapeptide from UDP-MurNAc-pentapeptide onto the lipid carrier undecaprenyl phosphate, yielding undecaprenyl-pyrophosphoryl-MurNAc-pentapeptide, known as lipid I. The sequence is that of Phospho-N-acetylmuramoyl-pentapeptide-transferase from Maricaulis maris (strain MCS10) (Caulobacter maris).